A 220-amino-acid chain; its full sequence is Pyridoxine/pyridoxamine 5'-phosphate oxidase (220 aa).

FMN-binding positions include 49 to 54, 68 to 69, K75, and Q97; these read RMVLLK and YT. K54 contacts substrate. 3 residues coordinate substrate: Y115, R119, and S123. Residues 132 to 133 and W176 contribute to the FMN site; that span reads QS. Residue 182 to 184 coordinates substrate; the sequence is RLH. Position 186 (R186) interacts with FMN.

This sequence belongs to the pyridoxamine 5'-phosphate oxidase family. As to quaternary structure, homodimer. The cofactor is FMN.

It catalyses the reaction pyridoxamine 5'-phosphate + O2 + H2O = pyridoxal 5'-phosphate + H2O2 + NH4(+). The enzyme catalyses pyridoxine 5'-phosphate + O2 = pyridoxal 5'-phosphate + H2O2. The protein operates within cofactor metabolism; pyridoxal 5'-phosphate salvage; pyridoxal 5'-phosphate from pyridoxamine 5'-phosphate: step 1/1. It participates in cofactor metabolism; pyridoxal 5'-phosphate salvage; pyridoxal 5'-phosphate from pyridoxine 5'-phosphate: step 1/1. Its function is as follows. Catalyzes the oxidation of either pyridoxine 5'-phosphate (PNP) or pyridoxamine 5'-phosphate (PMP) into pyridoxal 5'-phosphate (PLP). The chain is Pyridoxine/pyridoxamine 5'-phosphate oxidase from Paracoccus denitrificans (strain Pd 1222).